Consider the following 521-residue polypeptide: Cytochrome P450 monooxygenase 105 (521 aa).

Residues 12–32 (GVASPATLAVAAVTFLTALVL) form a helical membrane-spanning segment. 3 N-linked (GlcNAc...) asparagine glycosylation sites follow: N218, N274, and N317. Residue C449 participates in heme binding.

Belongs to the cytochrome P450 family. Heme serves as cofactor.

It is found in the membrane. Its pathway is secondary metabolite biosynthesis. In terms of biological role, cytochrome P450 monooxygenase that is able to use anthracene, carbazole, pyrene, phenanthrene and trans-stilbene as substrates for oxidation. These multifunctional properties against a series of polycyclic aromatic hydrocarbons (PAHs) suggest that CYP105 would play important roles, at least in part, in fungal metabolic systems involved in xenobiotic detoxification. This Postia placenta (strain ATCC 44394 / Madison 698-R) (Brown rot fungus) protein is Cytochrome P450 monooxygenase 105.